A 312-amino-acid polypeptide reads, in one-letter code: Methionyl-tRNA formyltransferase (312 aa).

109 to 112 is a binding site for (6S)-5,6,7,8-tetrahydrofolate; it reads SLLP.

Belongs to the Fmt family.

It carries out the reaction L-methionyl-tRNA(fMet) + (6R)-10-formyltetrahydrofolate = N-formyl-L-methionyl-tRNA(fMet) + (6S)-5,6,7,8-tetrahydrofolate + H(+). Functionally, attaches a formyl group to the free amino group of methionyl-tRNA(fMet). The formyl group appears to play a dual role in the initiator identity of N-formylmethionyl-tRNA by promoting its recognition by IF2 and preventing the misappropriation of this tRNA by the elongation apparatus. The polypeptide is Methionyl-tRNA formyltransferase (Anaeromyxobacter dehalogenans (strain 2CP-1 / ATCC BAA-258)).